A 180-amino-acid polypeptide reads, in one-letter code: Translation initiation factor IF-3 (180 aa).

This sequence belongs to the IF-3 family. In terms of assembly, monomer.

It localises to the cytoplasm. In terms of biological role, IF-3 binds to the 30S ribosomal subunit and shifts the equilibrium between 70S ribosomes and their 50S and 30S subunits in favor of the free subunits, thus enhancing the availability of 30S subunits on which protein synthesis initiation begins. In Escherichia coli (strain K12 / MC4100 / BW2952), this protein is Translation initiation factor IF-3.